We begin with the raw amino-acid sequence, 48 residues long: Keratin-associated protein 22-1 (48 aa).

In terms of assembly, interacts with hair keratins.

In terms of biological role, in the hair cortex, hair keratin intermediate filaments are embedded in an interfilamentous matrix, consisting of hair keratin-associated proteins (KRTAP), which are essential for the formation of a rigid and resistant hair shaft through their extensive disulfide bond cross-linking with abundant cysteine residues of hair keratins. The matrix proteins include the high-sulfur and high-glycine-tyrosine keratins. In Homo sapiens (Human), this protein is Keratin-associated protein 22-1 (KRTAP22-1).